The chain runs to 274 residues: Formamidopyrimidine-DNA glycosylase (274 aa).

The active-site Schiff-base intermediate with DNA is Pro-2. Glu-3 (proton donor) is an active-site residue. The active-site Proton donor; for beta-elimination activity is the Lys-58. DNA contacts are provided by His-91 and Arg-110. The FPG-type zinc finger occupies 238–272 (QVYDKTGQECVRCGTIIEKIQLGGRGTHFCPNCQR). The active-site Proton donor; for delta-elimination activity is Arg-262.

The protein belongs to the FPG family. Monomer. Requires Zn(2+) as cofactor.

The catalysed reaction is Hydrolysis of DNA containing ring-opened 7-methylguanine residues, releasing 2,6-diamino-4-hydroxy-5-(N-methyl)formamidopyrimidine.. It catalyses the reaction 2'-deoxyribonucleotide-(2'-deoxyribose 5'-phosphate)-2'-deoxyribonucleotide-DNA = a 3'-end 2'-deoxyribonucleotide-(2,3-dehydro-2,3-deoxyribose 5'-phosphate)-DNA + a 5'-end 5'-phospho-2'-deoxyribonucleoside-DNA + H(+). Involved in base excision repair of DNA damaged by oxidation or by mutagenic agents. Acts as a DNA glycosylase that recognizes and removes damaged bases. Has a preference for oxidized purines, such as 7,8-dihydro-8-oxoguanine (8-oxoG). Has AP (apurinic/apyrimidinic) lyase activity and introduces nicks in the DNA strand. Cleaves the DNA backbone by beta-delta elimination to generate a single-strand break at the site of the removed base with both 3'- and 5'-phosphates. The chain is Formamidopyrimidine-DNA glycosylase from Streptococcus pneumoniae (strain ATCC BAA-255 / R6).